A 247-amino-acid chain; its full sequence is Adenosylcobinamide-GDP ribazoletransferase (247 aa).

The next 5 membrane-spanning stretches (helical) occupy residues 34-54, 59-79, 113-133, 138-158, and 194-214; these read IITF…VFMV, CGVP…TGGF, GGLA…ELAL, ILAS…LLMY, and VLLP…AIFI.

The protein belongs to the CobS family. It depends on Mg(2+) as a cofactor.

The protein localises to the cell inner membrane. It catalyses the reaction alpha-ribazole + adenosylcob(III)inamide-GDP = adenosylcob(III)alamin + GMP + H(+). The catalysed reaction is alpha-ribazole 5'-phosphate + adenosylcob(III)inamide-GDP = adenosylcob(III)alamin 5'-phosphate + GMP + H(+). Its pathway is cofactor biosynthesis; adenosylcobalamin biosynthesis; adenosylcobalamin from cob(II)yrinate a,c-diamide: step 7/7. Its function is as follows. Joins adenosylcobinamide-GDP and alpha-ribazole to generate adenosylcobalamin (Ado-cobalamin). Also synthesizes adenosylcobalamin 5'-phosphate from adenosylcobinamide-GDP and alpha-ribazole 5'-phosphate. This is Adenosylcobinamide-GDP ribazoletransferase from Shigella dysenteriae serotype 1 (strain Sd197).